The following is a 181-amino-acid chain: Regulator of G-protein signaling 5 (181 aa).

Residues 64-180 enclose the RGS domain; it reads SLDKLLQNSY…VRSEFYKELI (117 aa).

In terms of tissue distribution, expressed in heart and muscle.

The protein localises to the cytoplasm. Its subcellular location is the membrane. Inhibits signal transduction by increasing the GTPase activity of G protein alpha subunits thereby driving them into their inactive GDP-bound form. Binds to G(i)-alpha and G(o)-alpha, but not to G(s)-alpha. The sequence is that of Regulator of G-protein signaling 5 (Rgs5) from Mus musculus (Mouse).